We begin with the raw amino-acid sequence, 370 residues long: Protein RecA (370 aa).

Positions 1–20 are disordered; that stretch reads MSFEERRKKDSKESSSKEKD. 78–85 lines the ATP pocket; sequence GPESSGKT.

Belongs to the RecA family.

Its subcellular location is the cytoplasm. Can catalyze the hydrolysis of ATP in the presence of single-stranded DNA, the ATP-dependent uptake of single-stranded DNA by duplex DNA, and the ATP-dependent hybridization of homologous single-stranded DNAs. It interacts with LexA causing its activation and leading to its autocatalytic cleavage. This is Protein RecA from Prochlorococcus marinus (strain MIT 9515).